Here is a 212-residue protein sequence, read N- to C-terminus: Lipid A acyltransferase PagP (212 aa).

The first 26 residues, 1 to 26 (MSSTYFHSSLLAATLFSVTLTAPAFA), serve as a signal peptide directing secretion. Positions 29–44 (NTQNTPQTITTKKPQP) are enriched in low complexity. The segment at 29–50 (NTQNTPQTITTKKPQPAENTFS) is disordered. Active-site residues include His-84, Asp-127, and Ser-128.

This sequence belongs to the lipid A palmitoyltransferase family. In terms of assembly, homodimer.

It localises to the cell outer membrane. The catalysed reaction is a lipid A + a 1,2-diacyl-sn-glycero-3-phosphocholine = a hepta-acyl lipid A + a 2-acyl-sn-glycero-3-phosphocholine. It catalyses the reaction a lipid IVA + a 1,2-diacyl-sn-glycero-3-phosphocholine = a lipid IVB + a 2-acyl-sn-glycero-3-phosphocholine. The enzyme catalyses a lipid IIA + a 1,2-diacyl-sn-glycero-3-phosphocholine = a lipid IIB + a 2-acyl-sn-glycero-3-phosphocholine. Functionally, transfers a fatty acid residue from the sn-1 position of a phospholipid to the N-linked hydroxyfatty acid chain on the proximal unit of lipid A or its precursors. This is Lipid A acyltransferase PagP from Proteus mirabilis (strain HI4320).